Consider the following 176-residue polypeptide: MKKSIFSKKLLVSFGSLVALAAIPLIAISCGQTDNNSSQSQQPGSGTTNTSGGTNSSGSTNGTAGTNSSGSTNGSGNGSNSETNTGNKTTSESNSGSSTGSQAGTTTNTGSGSNSESGMNSEKTENTQQSEAPGTNTGNKTTSESNSESGMNSEKTENTQQSEAPGTKTENTQHTS.

Positions 1–29 (MKKSIFSKKLLVSFGSLVALAAIPLIAIS) are cleaved as a signal peptide. The N-palmitoyl cysteine moiety is linked to residue cysteine 30. Residue cysteine 30 is the site of S-diacylglycerol cysteine attachment. The disordered stretch occupies residues 33 to 176 (TDNNSSQSQQ…TKTENTQHTS (144 aa)). Residues 35–121 (NNSSQSQQPG…GSNSESGMNS (87 aa)) are compositionally biased toward low complexity. Residues 123-135 (KTENTQQSEAPGT) form repeat 1. Residues 123–176 (KTENTQQSEAPGTNTGNKTTSESNSESGMNSEKTENTQQSEAPGTKTENTQHTS) are 2.5 X 13 AA repeats. Over residues 126–142 (NTQQSEAPGTNTGNKTT) the composition is skewed to polar residues. Over residues 143 to 153 (SESNSESGMNS) the composition is skewed to low complexity. Repeat 2 spans residues 155 to 167 (KTENTQQSEAPGT). Over residues 158 to 176 (NTQQSEAPGTKTENTQHTS) the composition is skewed to polar residues. Residues 168–176 (KTENTQHTS) form a 3; truncated repeat.

The protein localises to the cell membrane. Responsible for the antigenic diversity for host adaptation. The chain is Variant surface antigen A (vlpA) from Mesomycoplasma hyorhinis (Mycoplasma hyorhinis).